We begin with the raw amino-acid sequence, 543 residues long: Carboxypeptidase Y homolog A (543 aa).

A signal peptide spans 1-17 (MRVLPATLLVGAATAAA). Positions 18–124 (PPFQQILGLP…KLEAYDLRVK (107 aa)) are excised as a propeptide. Disulfide bonds link Cys179–Cys419, Cys313–Cys327, Cys337–Cys360, Cys344–Cys353, and Cys382–Cys389. Asn210 carries an N-linked (GlcNAc...) asparagine glycan. The active site involves Ser266. Asp458 is an active-site residue. Residue Asn509 is glycosylated (N-linked (GlcNAc...) asparagine). His520 is an active-site residue.

This sequence belongs to the peptidase S10 family.

The protein localises to the vacuole. The enzyme catalyses Release of a C-terminal amino acid with broad specificity.. In terms of biological role, vacuolar carboxypeptidase involved in degradation of small peptides. Digests preferentially peptides containing an aliphatic or hydrophobic residue in P1' position, as well as methionine, leucine or phenylalanine in P1 position of ester substrate. The polypeptide is Carboxypeptidase Y homolog A (cpyA) (Neosartorya fischeri (strain ATCC 1020 / DSM 3700 / CBS 544.65 / FGSC A1164 / JCM 1740 / NRRL 181 / WB 181) (Aspergillus fischerianus)).